A 276-amino-acid chain; its full sequence is 6-chlorohydroxyquinol 1,2-dioxygenase (276 aa).

4 residues coordinate Fe cation: Tyr-157, Tyr-191, His-215, and His-217.

This sequence belongs to the intradiol ring-cleavage dioxygenase family. The cofactor is Fe(3+).

The protein operates within aromatic compound metabolism. It participates in xenobiotic degradation. In terms of biological role, involved in the degradation of 2,4,6-trichlorophenol (2,4,6-TCP). May catalyze the oxidation of 6-chlorohydroxyquinol (6-CHQ) to 2-chloromaleylacetate (2-CMA). This chain is 6-chlorohydroxyquinol 1,2-dioxygenase, found in Cupriavidus pinatubonensis (strain JMP 134 / LMG 1197) (Cupriavidus necator (strain JMP 134)).